Here is a 392-residue protein sequence, read N- to C-terminus: Succinyl-diaminopimelate desuccinylase (392 aa).

Residue histidine 75 participates in Zn(2+) binding. Residue aspartate 77 is part of the active site. A Zn(2+)-binding site is contributed by aspartate 108. Catalysis depends on glutamate 147, which acts as the Proton acceptor. Positions 148, 176, and 365 each coordinate Zn(2+).

The protein belongs to the peptidase M20A family. DapE subfamily. In terms of assembly, homodimer. Requires Zn(2+) as cofactor. Co(2+) is required as a cofactor.

The catalysed reaction is N-succinyl-(2S,6S)-2,6-diaminopimelate + H2O = (2S,6S)-2,6-diaminopimelate + succinate. The protein operates within amino-acid biosynthesis; L-lysine biosynthesis via DAP pathway; LL-2,6-diaminopimelate from (S)-tetrahydrodipicolinate (succinylase route): step 3/3. Its function is as follows. Catalyzes the hydrolysis of N-succinyl-L,L-diaminopimelic acid (SDAP), forming succinate and LL-2,6-diaminopimelate (DAP), an intermediate involved in the bacterial biosynthesis of lysine and meso-diaminopimelic acid, an essential component of bacterial cell walls. This chain is Succinyl-diaminopimelate desuccinylase, found in Rhodopseudomonas palustris (strain BisB18).